The sequence spans 933 residues: Isoleucine--tRNA ligase (933 aa).

The 'HIGH' region motif lies at Pro57–His67. Glu554 contributes to the L-isoleucyl-5'-AMP binding site. A 'KMSKS' region motif is present at residues Lys595–Ser599. Lys598 contributes to the ATP binding site.

This sequence belongs to the class-I aminoacyl-tRNA synthetase family. IleS type 1 subfamily. Monomer.

Its subcellular location is the cytoplasm. It catalyses the reaction tRNA(Ile) + L-isoleucine + ATP = L-isoleucyl-tRNA(Ile) + AMP + diphosphate. Catalyzes the attachment of isoleucine to tRNA(Ile). As IleRS can inadvertently accommodate and process structurally similar amino acids such as valine, to avoid such errors it has two additional distinct tRNA(Ile)-dependent editing activities. One activity is designated as 'pretransfer' editing and involves the hydrolysis of activated Val-AMP. The other activity is designated 'posttransfer' editing and involves deacylation of mischarged Val-tRNA(Ile). The sequence is that of Isoleucine--tRNA ligase from Streptococcus pyogenes serotype M18 (strain MGAS8232).